Here is a 529-residue protein sequence, read N- to C-terminus: Phospholipase A1-Igamma2, chloroplastic (529 aa).

The N-terminal 43 residues, 1–43 (MAAIPSHNNLLTINHKNSITGSSSLNTNFSEINFPAKFRVATR), are a transit peptide targeting the chloroplast. Residues 316-320 (GHSLG) carry the GXSXG motif. Catalysis depends on Ser318, which acts as the Acyl-ester intermediate. Residues Asp381 and His437 each act as charge relay system in the active site.

Belongs to the AB hydrolase superfamily. Lipase family. As to quaternary structure, interacts with SBP1. In terms of tissue distribution, widely expressed. Highly expressed in leaves and stems.

It is found in the plastid. It localises to the chloroplast. The catalysed reaction is 1,2-dihexadecanoyl-sn-glycero-3-phosphocholine + H2O = 2-hexadecanoyl-sn-glycero-3-phosphocholine + hexadecanoate + H(+). It catalyses the reaction a 1,2-diacyl-3-O-(beta-D-galactosyl)-sn-glycerol + H2O = an acyl-3-O-(beta-D-galactosyl)-sn-glycerol + a fatty acid + H(+). The enzyme catalyses a 1,2-diacyl-3-O-[alpha-D-galactosyl-(1-&gt;6)-beta-D-galactosyl]-sn-glycerol + H2O = acyl-3-O-[alpha-D-galactosyl-(1-&gt;6)-beta-D-galactosyl]-sn-glycerol + a fatty acid + H(+). It carries out the reaction a triacylglycerol + H2O = a diacylglycerol + a fatty acid + H(+). Acylhydrolase with broad specificity. Catalyzes the hydrolysis of phosphatidylcholine at the sn-1 position. Possesses moderate activity toward phosphatidylcholine (PC), monogalactosyldiacylglycerol (MGDG), digalactosyldiacylglycerol (DGDG) and triacylglycerol (TAG). This chain is Phospholipase A1-Igamma2, chloroplastic, found in Arabidopsis thaliana (Mouse-ear cress).